A 312-amino-acid polypeptide reads, in one-letter code: Formimidoylglutamase (312 aa).

Mn(2+)-binding residues include histidine 123, aspartate 152, histidine 154, aspartate 156, cysteine 243, and aspartate 245.

This sequence belongs to the arginase family. The cofactor is Mn(2+).

It catalyses the reaction N-formimidoyl-L-glutamate + H2O = formamide + L-glutamate. It participates in amino-acid degradation; L-histidine degradation into L-glutamate; L-glutamate from N-formimidoyl-L-glutamate (hydrolase route): step 1/1. Catalyzes the conversion of N-formimidoyl-L-glutamate to L-glutamate and formamide. The protein is Formimidoylglutamase of Pseudomonas fluorescens (strain ATCC BAA-477 / NRRL B-23932 / Pf-5).